Here is a 513-residue protein sequence, read N- to C-terminus: Activin receptor type-2A (513 aa).

The signal sequence occupies residues 1–19 (MGAAAKLAFAVFLISCSSG). The Extracellular portion of the chain corresponds to 20 to 135 (AILGRSETQE…TSNPVTPKPP (116 aa)). 5 disulfide bridges follow: Cys30/Cys60, Cys50/Cys78, Cys85/Cys104, Cys91/Cys103, and Cys105/Cys110. N-linked (GlcNAc...) asparagine glycosylation is found at Asn43 and Asn66. The helical transmembrane segment at 136-161 (YYNILLYSLVPLMLIAGIVICAFWVY) threads the bilayer. Over 162–513 (RHHMMAYPPV…VDFPPKESSL (352 aa)) the chain is Cytoplasmic. A Protein kinase domain is found at 192-485 (LQLLEVKARG…GERITQMQRL (294 aa)). ATP contacts are provided by residues 198–206 (KARGRFGCV) and Lys219. Asp322 (proton acceptor) is an active-site residue.

It belongs to the protein kinase superfamily. TKL Ser/Thr protein kinase family. TGFB receptor subfamily. Part of a complex consisting of MAGI2/ARIP1, ACVR2A, ACVR1B and SMAD3. Interacts with MAGI2/ARIP1. Interacts with type I receptor ACVR1. Interacts with BMP7. Interacts with TSC22D1/TSC-22. Interacts with activin A/INHBA. Mg(2+) is required as a cofactor. The cofactor is Mn(2+).

The protein localises to the cell membrane. It carries out the reaction L-threonyl-[receptor-protein] + ATP = O-phospho-L-threonyl-[receptor-protein] + ADP + H(+). The enzyme catalyses L-seryl-[receptor-protein] + ATP = O-phospho-L-seryl-[receptor-protein] + ADP + H(+). Functionally, on ligand binding, forms a receptor complex consisting of two type II and two type I transmembrane serine/threonine kinases. Type II receptors phosphorylate and activate type I receptors which autophosphorylate, then bind and activate SMAD transcriptional regulators. Receptor for activin A, activin B and inhibin A. Mediates induction of adipogenesis by GDF6. The protein is Activin receptor type-2A of Rattus norvegicus (Rat).